Consider the following 643-residue polypeptide: COP9 signalosome complex subunit 10 (643 aa).

A compositionally biased stretch (acidic residues) spans 1 to 33 (MTDESDNYNDFMMSDEDMDSIEMEDEENDVEGD). Positions 1–37 (MTDESDNYNDFMMSDEDMDSIEMEDEENDVEGDEGQR) are disordered. The PCI domain maps to 331-517 (CKEEFWECLK…DTVTFYSEQH (187 aa)). Over residues 573–584 (DSQSHSKSNTKS) the composition is skewed to polar residues. The tract at residues 573 to 594 (DSQSHSKSNTKSMSRHVSGHDP) is disordered.

As to quaternary structure, component of a COP9 signalosome-like (CSN) complex.

It is found in the cytoplasm. It localises to the nucleus. Component of the COP9 signalosome (CSN) complex that acts as an regulator of the ubiquitin (Ubl) conjugation pathway by mediating the deneddylation of the cullin subunit of SCF-type E3 ubiquitin-protein ligase complexes. The CSN complex is involved in the regulation of the mating pheromone response. The polypeptide is COP9 signalosome complex subunit 10 (RRI2) (Candida glabrata (strain ATCC 2001 / BCRC 20586 / JCM 3761 / NBRC 0622 / NRRL Y-65 / CBS 138) (Yeast)).